A 95-amino-acid chain; its full sequence is Putative membrane protein insertion efficiency factor (95 aa).

The tract at residues 72 to 95 (FDPVPDAPTSPSPSSSCSCKGPHP) is disordered. Residues 83–95 (SPSSSCSCKGPHP) show a composition bias toward low complexity.

Belongs to the UPF0161 family.

It is found in the cell inner membrane. In terms of biological role, could be involved in insertion of integral membrane proteins into the membrane. This chain is Putative membrane protein insertion efficiency factor, found in Xanthomonas axonopodis pv. citri (strain 306).